The following is a 162-amino-acid chain: Nucleotide-binding protein Mpe_A3039 (162 aa).

The protein belongs to the YajQ family.

Functionally, nucleotide-binding protein. The protein is Nucleotide-binding protein Mpe_A3039 of Methylibium petroleiphilum (strain ATCC BAA-1232 / LMG 22953 / PM1).